Here is a 156-residue protein sequence, read N- to C-terminus: Small ribosomal subunit protein uS7c (156 aa).

The protein belongs to the universal ribosomal protein uS7 family. As to quaternary structure, part of the 30S ribosomal subunit.

The protein resides in the plastid. Its subcellular location is the chloroplast. Its function is as follows. One of the primary rRNA binding proteins, it binds directly to 16S rRNA where it nucleates assembly of the head domain of the 30S subunit. In Tupiella akineta (Green alga), this protein is Small ribosomal subunit protein uS7c (rps7).